A 273-amino-acid polypeptide reads, in one-letter code: 4-hydroxy-tetrahydrodipicolinate reductase (273 aa).

Position 12-17 (G12–M17) interacts with NAD(+). K39 is an NADP(+) binding site. NAD(+) contacts are provided by residues G102 to T104 and A126 to F129. Residue H159 is the Proton donor/acceptor of the active site. Residue H160 coordinates (S)-2,3,4,5-tetrahydrodipicolinate. K163 (proton donor) is an active-site residue. Position 169–170 (G169–T170) interacts with (S)-2,3,4,5-tetrahydrodipicolinate.

It belongs to the DapB family. In terms of assembly, homotetramer.

It is found in the cytoplasm. It catalyses the reaction (S)-2,3,4,5-tetrahydrodipicolinate + NAD(+) + H2O = (2S,4S)-4-hydroxy-2,3,4,5-tetrahydrodipicolinate + NADH + H(+). The catalysed reaction is (S)-2,3,4,5-tetrahydrodipicolinate + NADP(+) + H2O = (2S,4S)-4-hydroxy-2,3,4,5-tetrahydrodipicolinate + NADPH + H(+). It participates in amino-acid biosynthesis; L-lysine biosynthesis via DAP pathway; (S)-tetrahydrodipicolinate from L-aspartate: step 4/4. Its function is as follows. Catalyzes the conversion of 4-hydroxy-tetrahydrodipicolinate (HTPA) to tetrahydrodipicolinate. The chain is 4-hydroxy-tetrahydrodipicolinate reductase from Buchnera aphidicola subsp. Schizaphis graminum (strain Sg).